We begin with the raw amino-acid sequence, 193 residues long: Oligoribonuclease (193 aa).

Positions 20–183 constitute an Exonuclease domain; that stretch reads FVWLDCEMTG…ADVHESIEEL (164 aa). Residue Y141 is part of the active site.

The protein belongs to the oligoribonuclease family.

The protein localises to the cytoplasm. Its function is as follows. 3'-to-5' exoribonuclease specific for small oligoribonucleotides. This chain is Oligoribonuclease, found in Paracidovorax citrulli (strain AAC00-1) (Acidovorax citrulli).